The chain runs to 450 residues: Chromosomal replication initiator protein DnaA (450 aa).

Residues 1-84 (MTENEQIFWN…AVDYVYEDNL (84 aa)) are domain I, interacts with DnaA modulators. Residues 84 to 109 (LMIEQQHQGQQGYTEQAFQQLPAVQS) form a domain II region. Positions 110 to 328 (DLNPKYSFDN…GALKDISLVA (219 aa)) are domain III, AAA+ region. 4 residues coordinate ATP: G154, G156, K157, and T158. Residues 329–450 (NFKQIDTITV…EIETIKNKIK (122 aa)) are domain IV, binds dsDNA.

It belongs to the DnaA family. In terms of assembly, oligomerizes as a right-handed, spiral filament on DNA at oriC.

Its subcellular location is the cytoplasm. In terms of biological role, plays an essential role in the initiation and regulation of chromosomal replication. ATP-DnaA binds to the origin of replication (oriC) to initiate formation of the DNA replication initiation complex once per cell cycle. Binds the DnaA box (a 9 base pair repeat at the origin) and separates the double-stranded (ds)DNA. Forms a right-handed helical filament on oriC DNA; dsDNA binds to the exterior of the filament while single-stranded (ss)DNA is stabiized in the filament's interior. The ATP-DnaA-oriC complex binds and stabilizes one strand of the AT-rich DNA unwinding element (DUE), permitting loading of DNA polymerase. After initiation quickly degrades to an ADP-DnaA complex that is not apt for DNA replication. Binds acidic phospholipids. The protein is Chromosomal replication initiator protein DnaA of Streptococcus equi subsp. zooepidemicus (strain H70).